A 511-amino-acid polypeptide reads, in one-letter code: Peptide transporter YePEPT (511 aa).

At 1-19 (MQTSTNTPGGRTFFGHPYP) the chain is on the cytoplasmic side. A helical transmembrane segment spans residues 20–45 (LSGLFLSEMWERFSFYGIRPLLILFM). At 46–59 (AATVFDGGMGLPRE) the chain is on the periplasmic side. Residues 60 to 84 (QASAIVGIFAGSMYLAALPGGLLAD) form a helical membrane-spanning segment. Residues 85 to 88 (NWLG) lie on the Cytoplasmic side of the membrane. A helical transmembrane segment spans residues 89–109 (QQRAVWYGSILIALGHLSIAL). Residues 110 to 115 (SAFFGN) are Periplasmic-facing. The chain crosses the membrane as a helical span at residues 116–138 (DLFFIGLVFIVLGTGLFKTCISV). Over 139-149 (MVGTLYKPGDA) the chain is Cytoplasmic. Residues 150–175 (RRDGGFSLFYMGINMGSFIAPLLSGW) form a helical membrane-spanning segment. The Periplasmic portion of the chain corresponds to 176–181 (LLRTHG). The helical transmembrane segment at 182–208 (WHWGFGIGGIGMLVALLIFRGFAIPAM) threads the bilayer. Over 209 to 232 (KRYDAEVGLDSSWNKPTNQRQGVG) the chain is Cytoplasmic. A helical transmembrane segment spans residues 233–253 (RWVTAIMAVVVVIIALISQGV). Residues 254-256 (IPI) are Periplasmic-facing. Residues 257 to 279 (NPVMIASLLVYVIAASVTLYFIY) traverse the membrane as a helical segment. Residues 280 to 294 (LFAFAKMSRKDRARL) lie on the Cytoplasmic side of the membrane. Residues 295–321 (LVCFILLVSAAFFWSAFEQKPTSFNLF) traverse the membrane as a helical segment. The Periplasmic segment spans residues 322-335 (ANDYTDRMVMGFEI). A helical membrane pass occupies residues 336–357 (PTVWFQSINALFIILLAPVFSW). Over 358-369 (AWPALAKKKIQP) the chain is Cytoplasmic. Residues 370–396 (SSITKFVIGILCAAAGFAVMMYAAQHV) form a helical membrane-spanning segment. At 397 to 405 (LSSGGAGVS) the chain is on the periplasmic side. Residues 406–426 (PLWLVMSILLLTLGELCLSPI) form a helical membrane-spanning segment. Topologically, residues 427 to 441 (GLATMTLLAPDRMRG) are cytoplasmic. The chain crosses the membrane as a helical span at residues 442-462 (QVMGLWFCASSLGNLAAGLIG). Topologically, residues 463–471 (GHVKADQLD) are periplasmic. A helical transmembrane segment spans residues 472 to 496 (MLPTLFARCSIALVICAAVLILLIV). Over 497-511 (PIRRLMNNTQGQQTA) the chain is Cytoplasmic.

It belongs to the major facilitator superfamily. Proton-dependent oligopeptide transporter (POT/PTR) (TC 2.A.17) family.

It is found in the cell inner membrane. Its activity is regulated as follows. Transport is inhibited by the proton ionophore carbonyl cyanide m-chlorophenylhydrazone (CCCP). Mediates the proton-dependent uptake of dipeptides. Shows higher affinity for dipeptides with a negatively charged amino acid residue at the N-terminal position, such as Asp-Ala and Glu-Ala. Also displays specificity for Ala-Ala, Ala-Tyr and Tyr-Ala. This is Peptide transporter YePEPT from Yersinia enterocolitica subsp. palearctica serotype O:3 (strain YE-P4).